We begin with the raw amino-acid sequence, 100 residues long: Tetrahydromethanopterin S-methyltransferase subunit B (100 aa).

A helical membrane pass occupies residues 80-100; it reads KLTNIVYGFILGLIILFALLL.

The protein belongs to the MtrB family. As to quaternary structure, the complex is composed of 8 subunits; MtrA, MtrB, MtrC, MtrD, MtrE, MtrF, MtrG and MtrH.

Its subcellular location is the cell membrane. The enzyme catalyses 5-methyl-5,6,7,8-tetrahydromethanopterin + coenzyme M + 2 Na(+)(in) = 5,6,7,8-tetrahydromethanopterin + methyl-coenzyme M + 2 Na(+)(out). Its pathway is one-carbon metabolism; methanogenesis from CO(2); methyl-coenzyme M from 5,10-methylene-5,6,7,8-tetrahydromethanopterin: step 2/2. Part of a complex that catalyzes the formation of methyl-coenzyme M and tetrahydromethanopterin from coenzyme M and methyl-tetrahydromethanopterin. This is an energy-conserving, sodium-ion translocating step. The polypeptide is Tetrahydromethanopterin S-methyltransferase subunit B (Methanothermobacter marburgensis (strain ATCC BAA-927 / DSM 2133 / JCM 14651 / NBRC 100331 / OCM 82 / Marburg) (Methanobacterium thermoautotrophicum)).